A 322-amino-acid polypeptide reads, in one-letter code: Adenine deaminase (322 aa).

Residues histidine 11, histidine 13, and histidine 189 each coordinate Zn(2+). Glutamate 192 acts as the Proton donor in catalysis. Residue aspartate 270 participates in Zn(2+) binding. Aspartate 271 lines the substrate pocket.

Belongs to the metallo-dependent hydrolases superfamily. Adenosine and AMP deaminases family. Adenine deaminase type 2 subfamily. The cofactor is Zn(2+).

It catalyses the reaction adenine + H2O + H(+) = hypoxanthine + NH4(+). In terms of biological role, catalyzes the hydrolytic deamination of adenine to hypoxanthine. Plays an important role in the purine salvage pathway and in nitrogen catabolism. The protein is Adenine deaminase of Rhizobium etli (strain ATCC 51251 / DSM 11541 / JCM 21823 / NBRC 15573 / CFN 42).